Here is a 1006-residue protein sequence, read N- to C-terminus: Unconventional myosin-Id (1006 aa).

Ala-2 carries the post-translational modification N-acetylalanine. Residues 9–695 form the Myosin motor domain; that stretch reads FGKADFVLMD…TLFTLEELRA (687 aa). An ATP-binding site is contributed by 102 to 109; it reads GESGAGKT. Phosphoserine is present on Ser-200. Position 536 is a phosphotyrosine (Tyr-536). Residues 572–594 form an actin-binding region; the sequence is MIALVDNLASKEPYYVRCIKPND. 2 IQ domains span residues 699–719 and 721–741; these read IRIV…MRYK and TKAA…SYIH. Residues 812 to 1005 form the TH1 domain; it reads GQRADLGLQR…RSGFILSVPG (194 aa).

It belongs to the TRAFAC class myosin-kinesin ATPase superfamily. Myosin family. In terms of assembly, interacts (via the two IQ motifs) with calmodulin. Binds an additional calmodulin chain via a third, C-terminal region. Interacts with F-actin. As to expression, expressed in many tissues. Highest levels in brain, followed by lung and ovary; expression is lowest in spleen.

Its subcellular location is the cytoplasm. It localises to the perikaryon. It is found in the cell projection. The protein localises to the dendrite. The protein resides in the early endosome. Its subcellular location is the cell cortex. Unconventional myosin that functions as actin-based motor protein with ATPase activity. Plays a role in endosomal protein trafficking, and especially in the transfer of cargo proteins from early to recycling endosomes. Required for normal planar cell polarity in ciliated tracheal cells, for normal rotational polarity of cilia, and for coordinated, unidirectional ciliary movement in the trachea. Required for normal, polarized cilia organization in brain ependymal epithelial cells. This chain is Unconventional myosin-Id (MYO1D), found in Homo sapiens (Human).